Consider the following 304-residue polypeptide: ATP phosphoribosyltransferase (304 aa).

This sequence belongs to the ATP phosphoribosyltransferase family.

Its subcellular location is the cytoplasm. The enzyme catalyses 1-(5-phospho-beta-D-ribosyl)-ATP + diphosphate = 5-phospho-alpha-D-ribose 1-diphosphate + ATP. The protein operates within amino-acid biosynthesis; L-histidine biosynthesis; L-histidine from 5-phospho-alpha-D-ribose 1-diphosphate: step 1/9. Functionally, catalyzes the condensation of ATP and 5-phosphoribose 1-diphosphate to form N'-(5'-phosphoribosyl)-ATP (PR-ATP). Has a crucial role in the pathway because the rate of histidine biosynthesis seems to be controlled primarily by regulation of the enzymatic activity. The polypeptide is ATP phosphoribosyltransferase (HIS1) (Debaryomyces hansenii (strain ATCC 36239 / CBS 767 / BCRC 21394 / JCM 1990 / NBRC 0083 / IGC 2968) (Yeast)).